The sequence spans 115 residues: Meiotically up-regulated gene 42 protein (115 aa).

Has a role in meiosis. In Schizosaccharomyces pombe (strain 972 / ATCC 24843) (Fission yeast), this protein is Meiotically up-regulated gene 42 protein (mug42).